Here is a 414-residue protein sequence, read N- to C-terminus: 5-aminolevulinate synthase (414 aa).

3 residues coordinate substrate: R22, S133, and K152. Pyridoxal 5'-phosphate contacts are provided by S185, H213, and T241. Residue K244 is part of the active site. K244 bears the N6-(pyridoxal phosphate)lysine mark. Residues T273 and T274 each contribute to the pyridoxal 5'-phosphate site. T359 contributes to the substrate binding site.

This sequence belongs to the class-II pyridoxal-phosphate-dependent aminotransferase family. As to quaternary structure, homodimer. Pyridoxal 5'-phosphate serves as cofactor.

The catalysed reaction is succinyl-CoA + glycine + H(+) = 5-aminolevulinate + CO2 + CoA. Its pathway is porphyrin-containing compound metabolism; protoporphyrin-IX biosynthesis; 5-aminolevulinate from glycine: step 1/1. This Rickettsia prowazekii (strain Madrid E) protein is 5-aminolevulinate synthase (hemA).